Here is a 1402-residue protein sequence, read N- to C-terminus: Defective in tip formation protein A (1402 aa).

Disordered regions lie at residues 1-20 (MKDIEASKKPHTTTVAPPQI), 37-94 (NVTT…PQIV), 109-133 (NTPSLSSTPSPLPNNNNSNENDNDI), and 210-292 (KQSS…RRLK). 2 repeat units span residues 12 to 18 (TTTVAPP) and 40 to 46 (TTTVQPP). The segment at 12-92 (TTTVAPPQIN…TTTTTVQPPQ (81 aa)) is 4 X 7 AA repeat of T-T-T-[IV]-[AQ]-P-P. A compositionally biased stretch (low complexity) spans 38–47 (VTTTTVQPPQ). A compositionally biased stretch (pro residues) spans 48–58 (IVSPPSPPSPP). Residues 59–94 (QTTTIAPPTILPTTKTTTTTTTTTTTTTTVQPPQIV) show a composition bias toward low complexity. 2 consecutive repeat copies span residues 60 to 66 (TTTIAPP) and 86 to 92 (TTVQPPQ). The segment covering 210–234 (KQSSQSQLQQQLSSQSLQQIQQKSK) has biased composition (low complexity). Positions 235–253 (QPPPQQQQQQQPPPPPIPL) are enriched in pro residues. Over residues 254–279 (LPQIHQQLKPKQQQEQQQQQEQQQQQ) the composition is skewed to low complexity. Residues 350–383 (QRIKSFIENHKKKKQKYREYQSEKNQQQKSNSKK) adopt a coiled-coil conformation. Disordered regions lie at residues 429 to 453 (DQQQQQQQQQQSTMTTTSSSSSPMT) and 712 to 745 (NNNNNNINNNNNNNNNNNNNNNNNNNNNNSNLSN). The segment covering 430–453 (QQQQQQQQQQSTMTTTSSSSSPMT) has biased composition (low complexity).

The protein resides in the cell surface. Its function is as follows. Required for correct organization of the actin cytoskeleton and cytokinesis. Also required for apical sorting of prestalk cells, a prerequisite for formation of the tip at the mound stage and subsequent formation of the fruiting body. May be required for cell adhesion. The chain is Defective in tip formation protein A (dtfA) from Dictyostelium discoideum (Social amoeba).